The primary structure comprises 144 residues: Large ribosomal subunit protein uL15 (144 aa).

Residues 1 to 57 (MELNNLKPAEGSKHAKRRVGRGIGSGLGKTAGRGHKGQKSRSGGFHKVGFEGGQMPL) form a disordered region. Over residues 21–31 (RGIGSGLGKTA) the composition is skewed to gly residues.

This sequence belongs to the universal ribosomal protein uL15 family. In terms of assembly, part of the 50S ribosomal subunit.

Its function is as follows. Binds to the 23S rRNA. This is Large ribosomal subunit protein uL15 from Paraburkholderia phytofirmans (strain DSM 17436 / LMG 22146 / PsJN) (Burkholderia phytofirmans).